A 355-amino-acid chain; its full sequence is Septin-2B (355 aa).

The Septin-type G domain maps to 33 to 305 (KGFEFTLMVV…ENFRSERLKK (273 aa)). The tract at residues 43–50 (GESGLGKS) is G1 motif. GTP-binding positions include 43–50 (GESGLGKS), T77, G103, 182–190 (KADTLTLRE), G240, and R255. The segment at 100-103 (DTPG) is G3 motif. The G4 motif stretch occupies residues 181–184 (AKAD). An important for dimerization region spans residues 259–269 (WGVVEVENPEH).

Belongs to the TRAFAC class TrmE-Era-EngA-EngB-Septin-like GTPase superfamily. Septin GTPase family. In terms of assembly, septins polymerize into heterooligomeric protein complexes that form filaments, and associate with cellular membranes, actin filaments and microtubules. GTPase activity is required for filament formation. Can form heterooligomers with other family members and form filaments. Interacts with wdpcp.

It localises to the cytoplasm. It is found in the cytoskeleton. Its subcellular location is the spindle. The protein resides in the cleavage furrow. The protein localises to the midbody. It localises to the cell cortex. It is found in the cell projection. Its subcellular location is the cilium membrane. Functionally, filament-forming cytoskeletal GTPase. Required for normal organization of the actin cytoskeleton. Plays a role in the biogenesis of polarized columnar-shaped epithelium. Required for the progression through mitosis through regulation of chromosome congression. During anaphase, may be required for chromosome segregation and spindle elongation. Plays a role in ciliogenesis and collective cell movements including convergent extension during gastrulation. In cilia, required for the integrity of the diffusion barrier at the base of the primary cilium that prevents diffusion of transmembrane proteins between the cilia and plasma membranes. Controls cell shape and not polarization of cells during convergent extension. The protein is Septin-2B (sept2-B) of Xenopus tropicalis (Western clawed frog).